The primary structure comprises 201 residues: LexA repressor (201 aa).

The segment at residues 27–47 (RMEISSAFGFASPNAAEDHLK) is a DNA-binding region (H-T-H motif). Catalysis depends on for autocatalytic cleavage activity residues serine 116 and lysine 153.

Belongs to the peptidase S24 family. Homodimer.

The enzyme catalyses Hydrolysis of Ala-|-Gly bond in repressor LexA.. Represses a number of genes involved in the response to DNA damage (SOS response), including recA and lexA. In the presence of single-stranded DNA, RecA interacts with LexA causing an autocatalytic cleavage which disrupts the DNA-binding part of LexA, leading to derepression of the SOS regulon and eventually DNA repair. In Dechloromonas aromatica (strain RCB), this protein is LexA repressor.